We begin with the raw amino-acid sequence, 329 residues long: Acetyl-coenzyme A carboxylase carboxyl transferase subunit alpha (329 aa).

The CoA carboxyltransferase C-terminal domain maps to 40–294 (QLETLAARRR…KESLIRNLRE (255 aa)).

It belongs to the AccA family. In terms of assembly, acetyl-CoA carboxylase is a heterohexamer composed of biotin carboxyl carrier protein (AccB), biotin carboxylase (AccC) and two subunits each of ACCase subunit alpha (AccA) and ACCase subunit beta (AccD).

It localises to the cytoplasm. It carries out the reaction N(6)-carboxybiotinyl-L-lysyl-[protein] + acetyl-CoA = N(6)-biotinyl-L-lysyl-[protein] + malonyl-CoA. Its pathway is lipid metabolism; malonyl-CoA biosynthesis; malonyl-CoA from acetyl-CoA: step 1/1. In terms of biological role, component of the acetyl coenzyme A carboxylase (ACC) complex. First, biotin carboxylase catalyzes the carboxylation of biotin on its carrier protein (BCCP) and then the CO(2) group is transferred by the carboxyltransferase to acetyl-CoA to form malonyl-CoA. In Prochlorococcus marinus (strain MIT 9211), this protein is Acetyl-coenzyme A carboxylase carboxyl transferase subunit alpha.